We begin with the raw amino-acid sequence, 249 residues long: Suppressor of silencing P0 (249 aa).

Positions 63–67 (LPFHL) constitute an F-box-like domain.

It belongs to the polerovirus P0 protein family. Interacts (via F-box-like domain) with host AGO1; this interaction targets AGO1 for degradation, and thereby suppresses the silencing function of the latter. Interacts (via F-box-like domain) with host ASK1 and ASK2 (SKP proteins); these interactions are essential for viral pathogenicity. Part of a SCF P0 complex composed of P0 and the host proteins SKP and CUL1.

Suppressor of RNA-mediated gene silencing, also known as post-transcriptional gene silencing (PTGS), a mechanism of plant viral defense that limits the accumulation of viral RNAs. The P0 protein suppresses local PTGS using its F-box-like domain to mediate destabilization and degradation of the AGO1 protein. This chain is Suppressor of silencing P0, found in Turnip yellows virus (isolate FL-1) (TuYV).